Reading from the N-terminus, the 427-residue chain is Anaerobic glycerol-3-phosphate dehydrogenase subunit B (427 aa).

The protein belongs to the anaerobic G-3-P dehydrogenase subunit B family. As to quaternary structure, composed of a catalytic GlpA/B dimer and of membrane bound GlpC. FMN is required as a cofactor.

It catalyses the reaction a quinone + sn-glycerol 3-phosphate = dihydroxyacetone phosphate + a quinol. It functions in the pathway polyol metabolism; glycerol degradation via glycerol kinase pathway; glycerone phosphate from sn-glycerol 3-phosphate (anaerobic route): step 1/1. Functionally, conversion of glycerol 3-phosphate to dihydroxyacetone. Uses fumarate or nitrate as electron acceptor. This is Anaerobic glycerol-3-phosphate dehydrogenase subunit B from Glaesserella parasuis serovar 5 (strain SH0165) (Haemophilus parasuis).